Consider the following 251-residue polypeptide: Imidazole glycerol phosphate synthase subunit HisF (251 aa).

Active-site residues include aspartate 11 and aspartate 130.

Belongs to the HisA/HisF family. In terms of assembly, heterodimer of HisH and HisF.

The protein localises to the cytoplasm. It carries out the reaction 5-[(5-phospho-1-deoxy-D-ribulos-1-ylimino)methylamino]-1-(5-phospho-beta-D-ribosyl)imidazole-4-carboxamide + L-glutamine = D-erythro-1-(imidazol-4-yl)glycerol 3-phosphate + 5-amino-1-(5-phospho-beta-D-ribosyl)imidazole-4-carboxamide + L-glutamate + H(+). It functions in the pathway amino-acid biosynthesis; L-histidine biosynthesis; L-histidine from 5-phospho-alpha-D-ribose 1-diphosphate: step 5/9. In terms of biological role, IGPS catalyzes the conversion of PRFAR and glutamine to IGP, AICAR and glutamate. The HisF subunit catalyzes the cyclization activity that produces IGP and AICAR from PRFAR using the ammonia provided by the HisH subunit. This chain is Imidazole glycerol phosphate synthase subunit HisF, found in Pelodictyon phaeoclathratiforme (strain DSM 5477 / BU-1).